The primary structure comprises 438 residues: Mannose-1-phosphate guanylyltransferase regulatory subunit alpha (438 aa).

The tract at residues 2–260 (LKAVILIGGP…PNWWSQLKTA (259 aa)) is substrate-binding domain. GDP-alpha-D-mannose is bound by residues glutamate 87 and glutamine 256. The hexapeptide repeat domain stretch occupies residues 282 to 438 (LANVGIKRGE…SRSFKNEIIL (157 aa)). The interval 373 to 402 (TPSDPDPNKPFAKMENPPLFNNEGKLNPSI) is C-loop.

It belongs to the transferase hexapeptide repeat family. Component of the GMPPA-GMPPB mannose-1-phosphate guanylyltransferase complex composed of 4 GMPPA subunits and 8 GMPPB subunits; the complex is organized into three layers, a central layer made up of 2 GMPPA dimers sandwiched between two layers each made up of 2 GMPPB dimers.

In terms of biological role, regulatory subunit of the GMPPA-GMPPB mannose-1-phosphate guanylyltransferase complex; reduces the catalytic activity of GMPPB when part of the complex. Mediates allosteric feedback inhibition of GMPPB catalytic activity upon binding GDP-alpha-D-mannose. Together with GMPPB regulates GDP-alpha-D-mannose levels. The protein is Mannose-1-phosphate guanylyltransferase regulatory subunit alpha of Drosophila melanogaster (Fruit fly).